Consider the following 276-residue polypeptide: Glutamate racemase (276 aa).

Substrate-binding positions include 10-11 (DS) and 42-43 (YG). C74 functions as the Proton donor/acceptor in the catalytic mechanism. 75–76 (NT) lines the substrate pocket. C185 (proton donor/acceptor) is an active-site residue. Residue 186-187 (TH) coordinates substrate.

This sequence belongs to the aspartate/glutamate racemases family.

The catalysed reaction is L-glutamate = D-glutamate. The protein operates within cell wall biogenesis; peptidoglycan biosynthesis. Provides the (R)-glutamate required for cell wall biosynthesis. This Levilactobacillus brevis (Lactobacillus brevis) protein is Glutamate racemase.